Consider the following 413-residue polypeptide: Tyrosine--tRNA ligase (413 aa).

Position 34 (Tyr34) interacts with L-tyrosine. Residues 39–48 carry the 'HIGH' region motif; the sequence is PTSHSLTVGH. Residues Tyr164 and Gln168 each contribute to the L-tyrosine site. The 'KMSKS' region motif lies at 225-229; that stretch reads KFGKS. Position 228 (Lys228) interacts with ATP. In terms of domain architecture, S4 RNA-binding spans 347–413; it reads ILLVDALVQT…GKKNNALIVF (67 aa).

This sequence belongs to the class-I aminoacyl-tRNA synthetase family. TyrS type 1 subfamily. In terms of assembly, homodimer.

The protein localises to the cytoplasm. The catalysed reaction is tRNA(Tyr) + L-tyrosine + ATP = L-tyrosyl-tRNA(Tyr) + AMP + diphosphate + H(+). Functionally, catalyzes the attachment of tyrosine to tRNA(Tyr) in a two-step reaction: tyrosine is first activated by ATP to form Tyr-AMP and then transferred to the acceptor end of tRNA(Tyr). The sequence is that of Tyrosine--tRNA ligase from Onion yellows phytoplasma (strain OY-M).